Here is a 309-residue protein sequence, read N- to C-terminus: Putative lipid kinase YtlR (309 aa).

The 134-residue stretch at 1 to 134 (MSHWFFIINP…FHLGSVNFLQ (134 aa)) folds into the DAGKc domain. ATP is bound by residues 9–13 (NPTAG), T40, and 69–75 (GDGTMHE). Mg(2+) contacts are provided by N229, E232, and T234. Catalysis depends on E289, which acts as the Proton acceptor.

Belongs to the diacylglycerol/lipid kinase family. Mg(2+) serves as cofactor.

May catalyze the ATP-dependent phosphorylation of lipids other than diacylglycerol (DAG). In fact, is not able to exhibit diacylglycerol kinase activity in vitro. This Bacillus subtilis (strain 168) protein is Putative lipid kinase YtlR (ytlR).